The sequence spans 282 residues: Glycine/sarcosine N-methyltransferase (282 aa).

Residues 1–23 are compositionally biased toward polar residues; that stretch reads MTSTQNHPLQTQDDQQRFGQSPE. Residues 1–27 are disordered; it reads MTSTQNHPLQTQDDQQRFGQSPESVRE. Residues Tyr-35, Trp-43, Arg-52, Ala-76, Asp-97, 123–124, and Leu-141 contribute to the S-adenosyl-L-methionine site; that span reads DW. Substrate contacts are provided by Asn-143, Arg-176, and Tyr-217.

This sequence belongs to the class I-like SAM-binding methyltransferase superfamily. Glycine N-methyltransferase family. As to quaternary structure, monomer.

The enzyme catalyses glycine + 2 S-adenosyl-L-methionine = N,N-dimethylglycine + 2 S-adenosyl-L-homocysteine + 2 H(+). It catalyses the reaction glycine + S-adenosyl-L-methionine = sarcosine + S-adenosyl-L-homocysteine + H(+). The catalysed reaction is sarcosine + S-adenosyl-L-methionine = N,N-dimethylglycine + S-adenosyl-L-homocysteine + H(+). Its pathway is amine and polyamine biosynthesis; betaine biosynthesis via glycine pathway; betaine from glycine: step 1/3. It functions in the pathway amine and polyamine biosynthesis; betaine biosynthesis via glycine pathway; betaine from glycine: step 2/3. Its function is as follows. Catalyzes the methylation of glycine and sarcosine to sarcosine and dimethylglycine, respectively, with S-adenosylmethionine (AdoMet) acting as the methyl donor. It has strict specificity for glycine and sarcosine as the methyl group acceptors. This is Glycine/sarcosine N-methyltransferase from Parasynechococcus marenigrum (strain WH8102).